The sequence spans 184 residues: Non-specific lipid transfer protein GPI-anchored 6 (184 aa).

The signal sequence occupies residues 1-24 (MEKSTRTLFITIVITSMLLGFGNS). Intrachain disulfides connect Cys33–Cys74, Cys43–Cys58, Cys59–Cys101, and Cys72–Cys111. Residues 138 to 158 (NSTSPTQIHKDGTGGGKAEPV) are disordered. The GPI-anchor amidated serine moiety is linked to residue Ser160. Residues 161–184 (NGWKEKSWLGVELLIYLLVSLIFF) constitute a propeptide, removed in mature form.

It belongs to the plant LTP family. As to expression, preferentially expressed in the shoot apical meristem and the root meristem. Also present in the ovules and developing embryos. Observed in cotyledons, hypocotyls, flowers, leaves and siliques. Up-regulated in the epidermis of stems.

The protein localises to the cell membrane. In terms of biological role, lipid transfer protein involved in seed and ovule maturation and development, probably by regulating the fatty acids homeostasis during suberin and sporopollenin biosynthesis or deposition. Contributes to pre-invasive defense against some non-host powdery mildew pathogens by preventing the penetration of the epidermal cell wall by the fungal agents (e.g. Blumeria graminis f. sp. hordei (Bgh)). This Arabidopsis thaliana (Mouse-ear cress) protein is Non-specific lipid transfer protein GPI-anchored 6.